The following is a 208-amino-acid chain: FMN-dependent NADH:quinone oxidoreductase 1 (208 aa).

It belongs to the azoreductase type 1 family. As to quaternary structure, homodimer. It depends on FMN as a cofactor.

It catalyses the reaction 2 a quinone + NADH + H(+) = 2 a 1,4-benzosemiquinone + NAD(+). It carries out the reaction N,N-dimethyl-1,4-phenylenediamine + anthranilate + 2 NAD(+) = 2-(4-dimethylaminophenyl)diazenylbenzoate + 2 NADH + 2 H(+). In terms of biological role, quinone reductase that provides resistance to thiol-specific stress caused by electrophilic quinones. Its function is as follows. Also exhibits azoreductase activity. Catalyzes the reductive cleavage of the azo bond in aromatic azo compounds to the corresponding amines. The sequence is that of FMN-dependent NADH:quinone oxidoreductase 1 from Bacillus cereus (strain ATCC 14579 / DSM 31 / CCUG 7414 / JCM 2152 / NBRC 15305 / NCIMB 9373 / NCTC 2599 / NRRL B-3711).